Reading from the N-terminus, the 295-residue chain is 4-diphosphocytidyl-2-C-methyl-D-erythritol kinase (295 aa).

K15 is a catalytic residue. 102–112 (PIASGVGGGSS) contributes to the ATP binding site. D144 is a catalytic residue.

It belongs to the GHMP kinase family. IspE subfamily.

The enzyme catalyses 4-CDP-2-C-methyl-D-erythritol + ATP = 4-CDP-2-C-methyl-D-erythritol 2-phosphate + ADP + H(+). It participates in isoprenoid biosynthesis; isopentenyl diphosphate biosynthesis via DXP pathway; isopentenyl diphosphate from 1-deoxy-D-xylulose 5-phosphate: step 3/6. Its function is as follows. Catalyzes the phosphorylation of the position 2 hydroxy group of 4-diphosphocytidyl-2C-methyl-D-erythritol. The polypeptide is 4-diphosphocytidyl-2-C-methyl-D-erythritol kinase (Mesorhizobium japonicum (strain LMG 29417 / CECT 9101 / MAFF 303099) (Mesorhizobium loti (strain MAFF 303099))).